The chain runs to 312 residues: Light-independent protochlorophyllide reductase iron-sulfur ATP-binding protein (312 aa).

Residues 55–60 (GIGKST) and Lys84 each bind ATP. Ser59 serves as a coordination point for Mg(2+). [4Fe-4S] cluster-binding residues include Cys140 and Cys174. ATP-binding positions include 225-226 (NR) and 249-251 (PDL).

The protein belongs to the NifH/BchL/ChlL family. As to quaternary structure, homodimer. Protochlorophyllide reductase is composed of three subunits; BchL, BchN and BchB. It depends on [4Fe-4S] cluster as a cofactor.

It carries out the reaction chlorophyllide a + oxidized 2[4Fe-4S]-[ferredoxin] + 2 ADP + 2 phosphate = protochlorophyllide a + reduced 2[4Fe-4S]-[ferredoxin] + 2 ATP + 2 H2O. Its pathway is porphyrin-containing compound metabolism; bacteriochlorophyll biosynthesis (light-independent). Its function is as follows. Component of the dark-operative protochlorophyllide reductase (DPOR) that uses Mg-ATP and reduced ferredoxin to reduce ring D of protochlorophyllide (Pchlide) to form chlorophyllide a (Chlide). This reaction is light-independent. The L component serves as a unique electron donor to the NB-component of the complex, and binds Mg-ATP. The polypeptide is Light-independent protochlorophyllide reductase iron-sulfur ATP-binding protein (Rhodopseudomonas palustris (strain HaA2)).